We begin with the raw amino-acid sequence, 72 residues long: MLYSVFTRIYKIRKNNKTEMILAIYDRNAYIVKKTGIGSILLRDNGTRNTMLNIIYDTSSRNMQMVLRVSVL.

This is an uncharacterized protein from Vertebrata (FPV).